Here is a 760-residue protein sequence, read N- to C-terminus: E4 SUMO-protein ligase PIAL2 (760 aa).

The segment at 143–301 (IKSPGSTFSQ…GVIEASPDSD (159 aa)) is interacting domain (IND), required for interaction with MOM1 and PIAL1. The SP-RING-type zinc-finger motif lies at 298–379 (PDSDIIEGPS…MAKILKDVEH (82 aa)). Residues Cys-329, His-331, Cys-352, and Cys-355 each contribute to the Zn(2+) site. Residues 440–450 (GDNKVEDRKPC) are compositionally biased toward basic and acidic residues. 4 disordered regions span residues 440-471 (GDNKVEDRKPCMSDAQGQSNNNNTNKHPSNDD), 492-522 (LGNTAPQPHQASNTGTGQQYSNLSQIPMSID), 631-657 (GVRGLTSSHASTSRQHPSGPTVQSVSR), and 699-760 (SQQS…GPTS). 3 stretches are compositionally biased toward polar residues: residues 492–518 (LGNTAPQPHQASNTGTGQQYSNLSQIP), 631–653 (GVRGLTSSHASTSRQHPSGPTVQ), and 699–729 (SQQSQTSTRLNSSQPVQTPSVQTSQAQSPFT).

This sequence belongs to the PIAL protein ligase family. As to quaternary structure, homodimer. Interacts with MOM1 and PIAL1 to form a high molecular mass complex which mediates transcriptional silencing at heterochromatin regions. As to expression, expressed in leaves, stems and flowers, and, at low levels, in siliques and old leaves.

It localises to the nucleus. Its pathway is protein modification; protein sumoylation. In terms of biological role, together with MOM1 and PIAL1, regulates transcriptional gene silencing (TGS) independently of changes in DNA methylation. E4-type SUMO ligase that promotes SUMO chain formation in a SCE1-dependent manner and thus contributes to a pathway for proteolytic removal of sumoylation substrates. Involved in stress responses and sulfur metabolism. This Arabidopsis thaliana (Mouse-ear cress) protein is E4 SUMO-protein ligase PIAL2.